A 454-amino-acid polypeptide reads, in one-letter code: Transmembrane protease serine 3 (454 aa).

The Cytoplasmic segment spans residues 1 to 48 (MGENDPPAVEAPFSFRSLFGLDDLKISPVAPDADAVAAQILSLLPLKF). Residues 49 to 69 (FPIIVIGIIALILALAIGLGI) traverse the membrane as a helical; Signal-anchor for type II membrane protein segment. At 70 to 454 (HFDCSGKYRC…HEQMERDLKT (385 aa)) the chain is on the extracellular side. An LDL-receptor class A domain is found at 72–108 (DCSGKYRCRSSFKCIELIARCDGVSDCKDGEDEYRCV). Intrachain disulfides connect Cys-73–Cys-85, Cys-79–Cys-98, Cys-92–Cys-107, Cys-129–Cys-194, Cys-142–Cys-204, Cys-207–Cys-324, Cys-242–Cys-258, Cys-338–Cys-407, Cys-370–Cys-386, and Cys-397–Cys-425. In terms of domain architecture, SRCR spans 109 to 205 (RVGGQNAVLQ…SGHVVTLQCT (97 aa)). In terms of domain architecture, Peptidase S1 spans 217–449 (IVGGNMSLLS…FLDWIHEQME (233 aa)). Asn-221 carries N-linked (GlcNAc...) asparagine glycosylation. Active-site charge relay system residues include His-257 and Asp-304. Ser-401 functions as the Charge relay system in the catalytic mechanism.

The protein belongs to the peptidase S1 family. In terms of processing, undergoes autoproteolytic activation. As to expression, expressed in many tissues including fetal cochlea. Isoform T is found at increased levels in some carcinomas.

Its subcellular location is the endoplasmic reticulum membrane. Functionally, probable serine protease that plays a role in hearing. Acts as a permissive factor for cochlear hair cell survival and activation at the onset of hearing and is required for saccular hair cell survival. Activates ENaC (in vitro). This Homo sapiens (Human) protein is Transmembrane protease serine 3 (TMPRSS3).